A 225-amino-acid polypeptide reads, in one-letter code: NAD(P)H-quinone oxidoreductase subunit K, chloroplastic (225 aa).

[4Fe-4S] cluster contacts are provided by Cys-43, Cys-44, Cys-108, and Cys-139.

Belongs to the complex I 20 kDa subunit family. NDH is composed of at least 16 different subunits, 5 of which are encoded in the nucleus. Requires [4Fe-4S] cluster as cofactor.

The protein resides in the plastid. Its subcellular location is the chloroplast thylakoid membrane. It carries out the reaction a plastoquinone + NADH + (n+1) H(+)(in) = a plastoquinol + NAD(+) + n H(+)(out). The catalysed reaction is a plastoquinone + NADPH + (n+1) H(+)(in) = a plastoquinol + NADP(+) + n H(+)(out). Its function is as follows. NDH shuttles electrons from NAD(P)H:plastoquinone, via FMN and iron-sulfur (Fe-S) centers, to quinones in the photosynthetic chain and possibly in a chloroplast respiratory chain. The immediate electron acceptor for the enzyme in this species is believed to be plastoquinone. Couples the redox reaction to proton translocation, and thus conserves the redox energy in a proton gradient. This chain is NAD(P)H-quinone oxidoreductase subunit K, chloroplastic, found in Nuphar advena (Common spatterdock).